A 1381-amino-acid polypeptide reads, in one-letter code: DNA-directed RNA polymerase subunit beta'' (1381 aa).

Residues C224, C296, C303, and C306 each contribute to the Zn(2+) site.

The protein belongs to the RNA polymerase beta' chain family. RpoC2 subfamily. As to quaternary structure, in plastids the minimal PEP RNA polymerase catalytic core is composed of four subunits: alpha, beta, beta', and beta''. When a (nuclear-encoded) sigma factor is associated with the core the holoenzyme is formed, which can initiate transcription. Zn(2+) is required as a cofactor.

Its subcellular location is the plastid. The protein resides in the chloroplast. The enzyme catalyses RNA(n) + a ribonucleoside 5'-triphosphate = RNA(n+1) + diphosphate. In terms of biological role, DNA-dependent RNA polymerase catalyzes the transcription of DNA into RNA using the four ribonucleoside triphosphates as substrates. This Drimys granadensis protein is DNA-directed RNA polymerase subunit beta''.